The sequence spans 275 residues: Dermonecrotic toxin LspiSicTox-betaIE4i (275 aa).

Mg(2+)-binding residues include Glu-24 and Asp-26. Catalysis depends on His-40, which acts as the Nucleophile. Cystine bridges form between Cys-44–Cys-50 and Cys-46–Cys-188. A Mg(2+)-binding site is contributed by Asp-84.

It belongs to the arthropod phospholipase D family. Class II subfamily. It depends on Mg(2+) as a cofactor. As to expression, expressed by the venom gland.

The protein localises to the secreted. The enzyme catalyses an N-(acyl)-sphingosylphosphocholine = an N-(acyl)-sphingosyl-1,3-cyclic phosphate + choline. It carries out the reaction an N-(acyl)-sphingosylphosphoethanolamine = an N-(acyl)-sphingosyl-1,3-cyclic phosphate + ethanolamine. The catalysed reaction is a 1-acyl-sn-glycero-3-phosphocholine = a 1-acyl-sn-glycero-2,3-cyclic phosphate + choline. It catalyses the reaction a 1-acyl-sn-glycero-3-phosphoethanolamine = a 1-acyl-sn-glycero-2,3-cyclic phosphate + ethanolamine. Its function is as follows. Dermonecrotic toxins cleave the phosphodiester linkage between the phosphate and headgroup of certain phospholipids (sphingolipid and lysolipid substrates), forming an alcohol (often choline) and a cyclic phosphate. This toxin acts on sphingomyelin (SM). It may also act on ceramide phosphoethanolamine (CPE), lysophosphatidylcholine (LPC) and lysophosphatidylethanolamine (LPE), but not on lysophosphatidylserine (LPS), and lysophosphatidylglycerol (LPG). It acts by transphosphatidylation, releasing exclusively cyclic phosphate products as second products. Induces dermonecrosis, hemolysis, increased vascular permeability, edema, inflammatory response, and platelet aggregation. This Loxosceles spinulosa (Recluse spider) protein is Dermonecrotic toxin LspiSicTox-betaIE4i.